Here is a 273-residue protein sequence, read N- to C-terminus: 4-hydroxy-tetrahydrodipicolinate reductase (273 aa).

NAD(+) contacts are provided by residues 10–15, E36, 100–102, and 124–127; these read GAGGRM, GTT, and SGNM. Residue H157 is the Proton donor/acceptor of the active site. H158 contributes to the (S)-2,3,4,5-tetrahydrodipicolinate binding site. The Proton donor role is filled by K161. Residue 167-168 participates in (S)-2,3,4,5-tetrahydrodipicolinate binding; that stretch reads GT.

Belongs to the DapB family.

Its subcellular location is the cytoplasm. It carries out the reaction (S)-2,3,4,5-tetrahydrodipicolinate + NAD(+) + H2O = (2S,4S)-4-hydroxy-2,3,4,5-tetrahydrodipicolinate + NADH + H(+). The enzyme catalyses (S)-2,3,4,5-tetrahydrodipicolinate + NADP(+) + H2O = (2S,4S)-4-hydroxy-2,3,4,5-tetrahydrodipicolinate + NADPH + H(+). It functions in the pathway amino-acid biosynthesis; L-lysine biosynthesis via DAP pathway; (S)-tetrahydrodipicolinate from L-aspartate: step 4/4. In terms of biological role, catalyzes the conversion of 4-hydroxy-tetrahydrodipicolinate (HTPA) to tetrahydrodipicolinate. In Rhodopseudomonas palustris (strain BisA53), this protein is 4-hydroxy-tetrahydrodipicolinate reductase.